A 123-amino-acid chain; its full sequence is Large ribosomal subunit protein eL8 (123 aa).

Belongs to the eukaryotic ribosomal protein eL8 family. As to quaternary structure, part of the 50S ribosomal subunit. Probably part of the RNase P complex.

It is found in the cytoplasm. Its function is as follows. Multifunctional RNA-binding protein that recognizes the K-turn motif in ribosomal RNA, the RNA component of RNase P, box H/ACA, box C/D and box C'/D' sRNAs. In Methanosphaera stadtmanae (strain ATCC 43021 / DSM 3091 / JCM 11832 / MCB-3), this protein is Large ribosomal subunit protein eL8.